Here is a 299-residue protein sequence, read N- to C-terminus: Acetylglutamate kinase (299 aa).

Substrate contacts are provided by residues 72–73, Arg94, and Asn196; that span reads GG.

This sequence belongs to the acetylglutamate kinase family. ArgB subfamily.

The protein resides in the cytoplasm. It catalyses the reaction N-acetyl-L-glutamate + ATP = N-acetyl-L-glutamyl 5-phosphate + ADP. It functions in the pathway amino-acid biosynthesis; L-arginine biosynthesis; N(2)-acetyl-L-ornithine from L-glutamate: step 2/4. Its function is as follows. Catalyzes the ATP-dependent phosphorylation of N-acetyl-L-glutamate. This chain is Acetylglutamate kinase, found in Burkholderia thailandensis (strain ATCC 700388 / DSM 13276 / CCUG 48851 / CIP 106301 / E264).